Consider the following 464-residue polypeptide: Cysteine--tRNA ligase (464 aa).

Cys-28 is a Zn(2+) binding site. Positions 30–40 (PTVYDHSHIGH) match the 'HIGH' region motif. The Zn(2+) site is built by Cys-205, His-230, and Glu-234. The short motif at 263 to 267 (KMSKS) is the 'KMSKS' region element. Lys-266 contacts ATP.

It belongs to the class-I aminoacyl-tRNA synthetase family. The cofactor is Zn(2+).

Its subcellular location is the cytoplasm. It catalyses the reaction tRNA(Cys) + L-cysteine + ATP = L-cysteinyl-tRNA(Cys) + AMP + diphosphate. This chain is Cysteine--tRNA ligase, found in Ignicoccus hospitalis (strain KIN4/I / DSM 18386 / JCM 14125).